Reading from the N-terminus, the 238-residue chain is Small ribosomal subunit protein uS2 (238 aa).

Belongs to the universal ribosomal protein uS2 family.

The sequence is that of Small ribosomal subunit protein uS2 from Chloroflexus aurantiacus (strain ATCC 29366 / DSM 635 / J-10-fl).